A 143-amino-acid polypeptide reads, in one-letter code: Nucleoside diphosphate kinase (143 aa).

Residues Lys-11, Phe-59, Arg-87, Thr-93, Arg-104, and Asn-114 each coordinate ATP. His-117 (pros-phosphohistidine intermediate) is an active-site residue.

Belongs to the NDK family. In terms of assembly, homotetramer. Mg(2+) is required as a cofactor.

The protein localises to the cytoplasm. The enzyme catalyses a 2'-deoxyribonucleoside 5'-diphosphate + ATP = a 2'-deoxyribonucleoside 5'-triphosphate + ADP. It carries out the reaction a ribonucleoside 5'-diphosphate + ATP = a ribonucleoside 5'-triphosphate + ADP. Its function is as follows. Major role in the synthesis of nucleoside triphosphates other than ATP. The ATP gamma phosphate is transferred to the NDP beta phosphate via a ping-pong mechanism, using a phosphorylated active-site intermediate. This Shewanella baltica (strain OS223) protein is Nucleoside diphosphate kinase.